Here is a 148-residue protein sequence, read N- to C-terminus: MKVILLKDVPGQGKKGEVVDVAEGYARNYLFPRGLAEEATKGRMKALGDRQKVLAMKEKKAEEEARALAARLKGVTVVVRAKTGEGGRLFGSVNNKDIAEALASQYNIVLDKKKLLLKEPIKQLGMYSVAARLHPNIQAEVRVEVAGE.

This sequence belongs to the bacterial ribosomal protein bL9 family.

Functionally, binds to the 23S rRNA. In Pelotomaculum thermopropionicum (strain DSM 13744 / JCM 10971 / SI), this protein is Large ribosomal subunit protein bL9.